We begin with the raw amino-acid sequence, 97 residues long: Small ribosomal subunit protein uS17 (97 aa).

The segment at 1-20 is disordered; that stretch reads MSEATVNDNAAVKNEKGARK.

The protein belongs to the universal ribosomal protein uS17 family. In terms of assembly, part of the 30S ribosomal subunit.

Functionally, one of the primary rRNA binding proteins, it binds specifically to the 5'-end of 16S ribosomal RNA. The polypeptide is Small ribosomal subunit protein uS17 (Corynebacterium jeikeium (strain K411)).